We begin with the raw amino-acid sequence, 208 residues long: Probable GTP-binding protein EngB (208 aa).

The EngB-type G domain occupies L23–T205. GTP contacts are provided by residues G31–S38, G57–L61, D84–G87, T154–D157, and F182–A184. Residues S38 and T59 each contribute to the Mg(2+) site.

Belongs to the TRAFAC class TrmE-Era-EngA-EngB-Septin-like GTPase superfamily. EngB GTPase family. Mg(2+) serves as cofactor.

Functionally, necessary for normal cell division and for the maintenance of normal septation. The polypeptide is Probable GTP-binding protein EngB (Helicobacter pylori (strain Shi470)).